The sequence spans 302 residues: Pentatricopeptide repeat-containing protein At4g38150 (302 aa).

The segment covering 26-40 has biased composition (polar residues); it reads SATRFLSTGDNGQVD. Disordered stretches follow at residues 26–82 and 94–116; these read SATR…TTLS and VNQDSRETPKPEQYPQEPLPPPE. The segment covering 54-67 has biased composition (basic and acidic residues); that stretch reads LRGERSSNSHREPP. PPR repeat units lie at residues 130-164, 165-199, 200-234, and 235-269; these read LIPNAVAMLDGLCKDGLVQEAMKLFGLMRDKGTIP, EVVIYTAVVEAFCKAHKIEDAKRIFRKMQNNGIAP, NAFSYGVLVQGLYNCNMLDDAVAFCSEMLESGHSP, and NVPTFVELVDALCRVKGVEQAQSAIDTLNQKGFAV.

Belongs to the PPR family. P subfamily.

The polypeptide is Pentatricopeptide repeat-containing protein At4g38150 (Arabidopsis thaliana (Mouse-ear cress)).